The chain runs to 131 residues: Small ribosomal subunit protein uS9 (131 aa).

The protein belongs to the universal ribosomal protein uS9 family.

The sequence is that of Small ribosomal subunit protein uS9 from Actinobacillus succinogenes (strain ATCC 55618 / DSM 22257 / CCUG 43843 / 130Z).